We begin with the raw amino-acid sequence, 161 residues long: MNLSEFEREVKELFDADLVERAKNLKKSGNIFNPIFYIFFTRIVELSAIINDMVLPNRYELEELFRTRKDFLQIDYGTIGETIRRAWLYERERGVEFTFSNSVEDMLYLLYRMGKLQGKLDRIIMKYAEWEKNKLAELYFTILKILLELEDRINREIREEA.

This is an uncharacterized protein from Archaeoglobus fulgidus (strain ATCC 49558 / DSM 4304 / JCM 9628 / NBRC 100126 / VC-16).